The primary structure comprises 465 residues: VGFKAGVKDYKLTYYTPDYETLDTDILAAFRVTPQPGVPPEEAGAAVAAESSTGTWTTVWTDGLTSLDRYKGRCYHIEPVAGEENQYIAYVAYPLDLFEEGSVTNMFTSIVGNVFGFKALRALRLEDLRIPPAYSKTFQGPPHGIQVERDKLNKYGRPLLGCTIKPKLGLSAKNYGRAVYECLRGGLDFTKDDENVNSQPFMRWRDRFVFFAEALYKAQAETGEIKGHYLNATAGTCEEMIKRAVFARELGVPIVMHDYLTGGFTANTSLAHYCRDNGLLLHIHRAMHAVIDRQKNHGIHFRVLAKALRLSGGDHIHAGTVVGKLEGERDITLGFVDLLRDDYVEKDRSRGIYFTQFWVSIPGVLPVASGGIHVWHMPALTEIFGDDSVLQFGGGTLGHPWGNAPGAVANRVALEACVQARNEGRDLAREGNEIIREASKWSTELAAACEIWKEIKFVFEAMDTL.

At K4 the chain carries N6,N6,N6-trimethyllysine. N113 and T163 together coordinate substrate. Catalysis depends on K165, which acts as the Proton acceptor. K167 lines the substrate pocket. Mg(2+)-binding residues include K191, D193, and E194. Position 191 is an N6-carboxylysine (K191). H284 functions as the Proton acceptor in the catalytic mechanism. 3 residues coordinate substrate: R285, H317, and S369.

This sequence belongs to the RuBisCO large chain family. Type I subfamily. Heterohexadecamer of 8 large chains and 8 small chains; disulfide-linked. The disulfide link is formed within the large subunit homodimers. Requires Mg(2+) as cofactor. Post-translationally, the disulfide bond which can form in the large chain dimeric partners within the hexadecamer appears to be associated with oxidative stress and protein turnover.

It is found in the plastid. It localises to the chloroplast. It catalyses the reaction 2 (2R)-3-phosphoglycerate + 2 H(+) = D-ribulose 1,5-bisphosphate + CO2 + H2O. It carries out the reaction D-ribulose 1,5-bisphosphate + O2 = 2-phosphoglycolate + (2R)-3-phosphoglycerate + 2 H(+). In terms of biological role, ruBisCO catalyzes two reactions: the carboxylation of D-ribulose 1,5-bisphosphate, the primary event in carbon dioxide fixation, as well as the oxidative fragmentation of the pentose substrate in the photorespiration process. Both reactions occur simultaneously and in competition at the same active site. In Nepenthes alata (Winged pitcher plant), this protein is Ribulose bisphosphate carboxylase large chain.